We begin with the raw amino-acid sequence, 443 residues long: Putative transporter AmpG 1 (443 aa).

A run of 13 helical transmembrane segments spans residues 5-25 (SHIY…MITG), 42-62 (IGML…APVF), 78-98 (LSWI…LSFL), 104-124 (LVLL…QDTI), 143-163 (GIYI…AIYL), 171-191 (AIYK…ILVA), 230-250 (FNYF…GFYF), 254-274 (DINL…YRLP), 299-319 (VCKF…GIIM), 324-344 (ILYS…FFIL), 354-374 (ILFI…TAYI), 393-413 (LSSM…YMVV), and 415-435 (FGWQ…LLIL).

It belongs to the major facilitator superfamily.

It is found in the cell inner membrane. The chain is Putative transporter AmpG 1 (ampG1) from Rickettsia prowazekii (strain Madrid E).